The sequence spans 71 residues: Beta-defensin 25 (71 aa).

The first 22 residues, 1–22, serve as a signal peptide directing secretion; the sequence is MAKWILLIVALLVLSHVPPGST. Disulfide bonds link Cys-27/Cys-54, Cys-34/Cys-48, and Cys-38/Cys-55.

This sequence belongs to the beta-defensin family.

The protein localises to the secreted. Has antibacterial activity. This is Beta-defensin 25 (Defb25) from Mus musculus (Mouse).